A 419-amino-acid polypeptide reads, in one-letter code: rRNA methyltransferase 3, mitochondrial (419 aa).

Residues Met1–Val39 constitute a mitochondrion transit peptide. The disordered stretch occupies residues Ala42 to Cys68. A compositionally biased stretch (basic and acidic residues) spans Glu44–Arg56. S-adenosyl-L-methionine-binding residues include Gly357, Ile381, and Leu390.

It belongs to the class IV-like SAM-binding methyltransferase superfamily. RNA methyltransferase TrmH family.

It is found in the mitochondrion. The enzyme catalyses a uridine in rRNA + S-adenosyl-L-methionine = a 2'-O-methyluridine in rRNA + S-adenosyl-L-homocysteine + H(+). Its function is as follows. S-adenosyl-L-methionine-dependent 2'-O-ribose methyltransferase that catalyzes the formation of 2'-O-methylguanosine at position 1370 (Gm1370) in the mitochondrial large subunit ribosomal RNA (mtLSU rRNA), a conserved modification in the peptidyl transferase domain of the mtLSU rRNA. Also required for formation of 2'-O-methyluridine at position 1369 (Um1369) mediated by MRM2. The polypeptide is rRNA methyltransferase 3, mitochondrial (Xenopus laevis (African clawed frog)).